Here is a 185-residue protein sequence, read N- to C-terminus: Prorelaxin 1 (185 aa).

The N-terminal stretch at 1–22 is a signal peptide; the sequence is MSSRFLLQLLGFWLLLSQPCRT. 3 cysteine pairs are disulfide-bonded: cysteine 36–cysteine 171, cysteine 48–cysteine 185, and cysteine 170–cysteine 175. A propeptide spans 58–156 (connecting peptide); that stretch reads SQEEPALLAR…LKYLQSDTHS (99 aa). Residues 135 to 161 are disordered; it reads RLGEAEDGSPPGLKYLQSDTHSRKKRE.

The protein belongs to the insulin family. As to quaternary structure, heterodimer of a B chain and an A chain linked by two disulfide bonds.

It is found in the secreted. In terms of biological role, relaxin is an ovarian hormone that acts with estrogen to produce dilatation of the birth canal in many mammals. The sequence is that of Prorelaxin 1 (Rln1) from Mus musculus (Mouse).